Reading from the N-terminus, the 476-residue chain is Cysteine--tRNA ligase (476 aa).

Cys28 is a Zn(2+) binding site. The short motif at 30–40 (PTVYDHTHLGH) is the 'HIGH' region element. The Zn(2+) site is built by Cys208, His233, and Glu237. A 'KMSKS' region motif is present at residues 265 to 269 (KMSKS). Lys268 lines the ATP pocket.

The protein belongs to the class-I aminoacyl-tRNA synthetase family. Zn(2+) serves as cofactor.

It is found in the cytoplasm. It carries out the reaction tRNA(Cys) + L-cysteine + ATP = L-cysteinyl-tRNA(Cys) + AMP + diphosphate. The polypeptide is Cysteine--tRNA ligase (Methanococcus maripaludis (strain C7 / ATCC BAA-1331)).